The chain runs to 436 residues: F-box protein SKIP16 (436 aa).

Residues 75 to 111 (RESFRMYPWNLVKRVRLCWDNLKQWLTLNFPEAKATL) form the F-box; degenerate domain. The region spanning 295 to 436 (VSVTNGVQVR…FPLELPDYIF (142 aa)) is the ApaG domain.

In terms of assembly, part of a SCF (ASK-cullin-F-box) protein ligase complex. Interacts with SKP1A/ASK1, SKP1B/ASK2, ASK4, ASK11 and ASK13.

Its pathway is protein modification; protein ubiquitination. Functionally, component of SCF(ASK-cullin-F-box) E3 ubiquitin ligase complexes, which may mediate the ubiquitination and subsequent proteasomal degradation of target proteins. This is F-box protein SKIP16 (SKIP16) from Arabidopsis thaliana (Mouse-ear cress).